We begin with the raw amino-acid sequence, 262 residues long: Ornithine carbamoyltransferase (262 aa).

Residues 3–7 (STRTR), Gln30, Arg54, and 81–84 (HPTQ) each bind carbamoyl phosphate. Residues Asn114, Asp178, and 182-183 (SM) contribute to the L-ornithine site. Carbamoyl phosphate is bound by residues 219–222 (HCLP) and Thr247.

It belongs to the aspartate/ornithine carbamoyltransferase superfamily. OTCase family.

The protein resides in the cytoplasm. It catalyses the reaction carbamoyl phosphate + L-ornithine = L-citrulline + phosphate + H(+). It participates in amino-acid biosynthesis; L-arginine biosynthesis; L-arginine from L-ornithine and carbamoyl phosphate: step 1/3. The sequence is that of Ornithine carbamoyltransferase (argF) from Neisseria cinerea.